The following is a 471-amino-acid chain: Delta(24(24(1)))-sterol reductase erg4A (471 aa).

The N-linked (GlcNAc...) asparagine glycan is linked to asparagine 15. 8 helical membrane-spanning segments follow: residues 33–53, 89–109, 130–150, 159–179, 216–236, 244–264, 282–302, and 313–333; these read VTLI…GAVL, WTIY…LPGV, AVSS…TGVL, FGPL…VAYI, MFFE…GTAL, LVAG…NACA, GFML…HCTL, and HWNP…YWVW. Residues lysine 340, arginine 344, leucine 380, and 392–393 contribute to the NADP(+) site; that span reads HY. The chain crosses the membrane as a helical span at residues 397–417; the sequence is VFFAISWGLITGFNSPFPWFY. NADP(+) contacts are provided by residues aspartate 432, 436–440, and tyrosine 447; that span reads CRERY.

The protein belongs to the ERG4/ERG24 family.

It is found in the endoplasmic reticulum membrane. It carries out the reaction ergosterol + NADP(+) = ergosta-5,7,22,24(28)-tetraen-3beta-ol + NADPH + H(+). It participates in steroid metabolism; ergosterol biosynthesis. In terms of biological role, delta(24(24(1)))-sterol reductase; part of the third module of ergosterol biosynthesis pathway that includes the late steps of the pathway. Catalyzes the last step of ergosterol biosynthesis by converting ergosta-5,7,22,24(28)-tetraen-3beta-ol into ergosterol. The third module or late pathway involves the ergosterol synthesis itself through consecutive reactions that mainly occur in the endoplasmic reticulum (ER) membrane. Firstly, the squalene synthase erg9 catalyzes the condensation of 2 farnesyl pyrophosphate moieties to form squalene, which is the precursor of all steroids. Squalene synthase is crucial for balancing the incorporation of farnesyl diphosphate (FPP) into sterol and nonsterol isoprene synthesis. Secondly, squalene is converted into lanosterol by the consecutive action of the squalene epoxidase erg1 and the lanosterol synthase erg7. Then, the delta(24)-sterol C-methyltransferase erg6 methylates lanosterol at C-24 to produce eburicol. Eburicol is the substrate of the sterol 14-alpha demethylase encoded by cyp51A and cyp51B, to yield 4,4,24-trimethyl ergosta-8,14,24(28)-trienol. The C-14 reductase erg24 then reduces the C14=C15 double bond which leads to 4,4-dimethylfecosterol. A sequence of further demethylations at C-4, involving the C-4 demethylation complex containing the C-4 methylsterol oxidases erg25A or erg25B, the sterol-4-alpha-carboxylate 3-dehydrogenase erg26 and the 3-keto-steroid reductase erg27, leads to the production of fecosterol via 4-methylfecosterol. The C-8 sterol isomerase erg2 then catalyzes the reaction which results in unsaturation at C-7 in the B ring of sterols and thus converts fecosterol to episterol. The sterol-C5-desaturase erg3B then catalyzes the introduction of a C-5 double bond in the B ring to produce 5-dehydroepisterol. The 2 other sterol-C5-desaturases, erg3A and erg3C, seem to be less important in ergosterol biosynthesis. The C-22 sterol desaturase erg5 further converts 5-dehydroepisterol into ergosta-5,7,22,24(28)-tetraen-3beta-ol by forming the C-22(23) double bond in the sterol side chain. Finally, ergosta-5,7,22,24(28)-tetraen-3beta-ol is substrate of the C-24(28) sterol reductases erg4A and erg4B to produce ergosterol. Possible alternative sterol biosynthetic pathways might exist from fecosterol to ergosterol, depending on the activities of the erg3 isoforms. In Aspergillus fumigatus (strain ATCC MYA-4609 / CBS 101355 / FGSC A1100 / Af293) (Neosartorya fumigata), this protein is Delta(24(24(1)))-sterol reductase erg4A.